Consider the following 537-residue polypeptide: Beta-hexosaminidase subunit beta (537 aa).

An N-terminal signal peptide occupies residues 1-23 (MPGSPRRAPGLLLQALVAMVSLA). Asn-62 carries N-linked (GlcNAc...) asparagine glycosylation. Cys-69 and Cys-115 are disulfide-bonded. Residues Asn-168 and Asn-305 are each glycosylated (N-linked (GlcNAc...) asparagine). 2 disulfides stabilise this stretch: Cys-287–Cys-338 and Cys-512–Cys-529. The active-site Proton donor is Glu-333.

It belongs to the glycosyl hydrolase 20 family. In terms of assembly, there are 3 forms of beta-hexosaminidase: hexosaminidase A is a heterodimer composed of one subunit alpha and one subunit beta (chain A and B); hexosaminidase B is a homodimer of two beta subunits (two chains A and B); hexosaminidase S is a homodimer of two alpha subunits. The composition of the dimer (isozyme A versus isozyme S) has a significant effect on the substrate specificity of the alpha subunit active site.

Its subcellular location is the lysosome. The protein resides in the cytoplasmic vesicle. The protein localises to the secretory vesicle. It localises to the cortical granule. It carries out the reaction Hydrolysis of terminal non-reducing N-acetyl-D-hexosamine residues in N-acetyl-beta-D-hexosaminides.. It catalyses the reaction N-acetyl-beta-D-galactosaminyl-(1-&gt;4)-beta-D-3-sulfogalactosyl-(1-&gt;4)-beta-D-glucosyl-(1&lt;-&gt;1')-ceramide + H2O = a beta-D-3-sulfogalactosyl-(1-&gt;4)-beta-D-glucosyl-(1&lt;-&gt;1')-ceramide + N-acetyl-beta-D-galactosamine. The enzyme catalyses a ganglioside GM2 (d18:1(4E)) + H2O = a ganglioside GM3 (d18:1(4E)) + N-acetyl-beta-D-galactosamine. The catalysed reaction is a ganglioside GM2 + H2O = a ganglioside GM3 + N-acetyl-beta-D-galactosamine. It carries out the reaction beta-D-GalNAc-(1-&gt;4)-alpha-L-IdoA-(1-&gt;3)-beta-D-GalNAc-4-sulfate-(1-&gt;4)-alpha-L-IdoA-(1-&gt;3)-D-GalNAc-4-sulfate + H2O = alpha-L-IdoA-(1-&gt;3)-beta-D-GalNAc-4-sulfate-(1-&gt;4)-alpha-L-IdoA-(1-&gt;3)-D-GalNAc-4-sulfate + N-acetyl-D-galactosamine. It catalyses the reaction N-acetyl-beta-D-6-sulfogalactosaminyl-(1-&gt;4)-alpha-L-iduronyl-(1-&gt;3)-N-acetyl-D-6-sulfogalactosamine + H2O = alpha-L-iduronyl-(1-&gt;3)-N-acetyl-D-6-sulfogalactosamine + N-acetyl-D-6-sulfogalactosamine. With respect to regulation, addition of GM2A stimulates the hydrolysis of sulfated glycosphingolipid SM2 and the ganglioside GM2. Its function is as follows. Hydrolyzes the non-reducing end N-acetyl-D-hexosamine and/or sulfated N-acetyl-D-hexosamine of glycoconjugates, such as the oligosaccharide moieties from proteins and neutral glycolipids, or from certain mucopolysaccharides. The isozyme B does not hydrolyze each of these substrates, however hydrolyzes efficiently neutral oligosaccharide. Only the isozyme A is responsible for the degradation of GM2 gangliosides in the presence of GM2A. During fertilization is responsible, at least in part, for the zona block to polyspermy. Present in the cortical granules of non-activated oocytes, is exocytosed during the cortical reaction in response to oocyte activation and inactivates the sperm galactosyltransferase-binding site, accounting for the block in sperm binding to the zona pellucida. This is Beta-hexosaminidase subunit beta from Rattus norvegicus (Rat).